A 210-amino-acid polypeptide reads, in one-letter code: Secreted isochorismatase effector Isc1 (210 aa).

Residues Asp25, Lys90, and Cys124 contribute to the active site.

Belongs to the isochorismatase family.

It localises to the secreted. Its subcellular location is the host cytoplasm. The protein localises to the host nucleus. The enzyme catalyses isochorismate + H2O = (2S,3S)-2,3-dihydroxy-2,3-dihydrobenzoate + pyruvate. Secreted isochorismatase required for full virulence of P.sojae. Suppresses salicylate-mediated innate immunity of the host by disrupting the plant salicylate metabolism pathway via hydrolysis of its isochorismate precursor. The sequence is that of Secreted isochorismatase effector Isc1 from Phytophthora sojae (strain P6497) (Soybean stem and root rot agent).